The primary structure comprises 425 residues: Multifunctional CCA protein (425 aa).

The ATP site is built by G8 and R11. G8 and R11 together coordinate CTP. E21 and D23 together coordinate Mg(2+). The ATP site is built by R91, R137, and R140. The CTP site is built by R91, R137, and R140. The HD domain maps to 228 to 329 (TGVHTLMVLD…VDLLDRLGAL (102 aa)).

Belongs to the tRNA nucleotidyltransferase/poly(A) polymerase family. Bacterial CCA-adding enzyme type 1 subfamily. In terms of assembly, monomer. Can also form homodimers and oligomers. It depends on Mg(2+) as a cofactor. Ni(2+) is required as a cofactor.

It catalyses the reaction a tRNA precursor + 2 CTP + ATP = a tRNA with a 3' CCA end + 3 diphosphate. It carries out the reaction a tRNA with a 3' CCA end + 2 CTP + ATP = a tRNA with a 3' CCACCA end + 3 diphosphate. Its function is as follows. Catalyzes the addition and repair of the essential 3'-terminal CCA sequence in tRNAs without using a nucleic acid template. Adds these three nucleotides in the order of C, C, and A to the tRNA nucleotide-73, using CTP and ATP as substrates and producing inorganic pyrophosphate. tRNA 3'-terminal CCA addition is required both for tRNA processing and repair. Also involved in tRNA surveillance by mediating tandem CCA addition to generate a CCACCA at the 3' terminus of unstable tRNAs. While stable tRNAs receive only 3'-terminal CCA, unstable tRNAs are marked with CCACCA and rapidly degraded. In Methylococcus capsulatus (strain ATCC 33009 / NCIMB 11132 / Bath), this protein is Multifunctional CCA protein.